Consider the following 307-residue polypeptide: Nuclear polyadenylated RNA-binding protein nab2 (307 aa).

The disordered stretch occupies residues 102-135 (STDKSQQSFSVPETSIQPQSSQTPNITSLREEKE). A compositionally biased stretch (polar residues) spans 105–129 (KSQQSFSVPETSIQPQSSQTPNITS). 3 C3H1-type zinc fingers span residues 178-202 (TQEV…HPTP), 217-232 (CASG…VKGH), and 254-268 (CKYK…RFIH). The tract at residues 274 to 307 (NMTWRPPSKTEETSLSERSFAVNESEEQLHVPSV) is disordered.

This sequence belongs to the ZC3H14 family.

It is found in the nucleus. Its function is as follows. RNA-binding protein involved in RNA processing. Acts as a regulator of mRNA stability: binds to mRNAs and pre-mRNAs, preventing their degradation. Involved in the biogenesis of circular RNAs (circRNAs) which are produced by back-splicing circularization of pre-mRNAs. This is Nuclear polyadenylated RNA-binding protein nab2 from Schizosaccharomyces pombe (strain 972 / ATCC 24843) (Fission yeast).